Here is a 955-residue protein sequence, read N- to C-terminus: Histone deacetylase 6 (955 aa).

Histone deacetylase regions lie at residues 15 to 337 (TLIG…YAPF) and 425 to 749 (METL…VLQN). His-146 (1) is an active-site residue. His-561 serves as the catalytic 2. Positions 815–840 (SIDMADQSSSSGSSSSSTRPSHNLEI) are disordered. Over residues 818–831 (MADQSSSSGSSSSS) the composition is skewed to low complexity. A UBP-type zinc finger spans residues 853–951 (ATCPHLKEVK…SAAHESKFGE (99 aa)). Zn(2+) contacts are provided by Cys-855, His-857, Cys-875, Cys-878, Cys-887, Cys-890, and Cys-895. The segment at 896 to 898 (GRF) is ubiquitin binding. Residues His-902, His-906, His-912, Cys-925, and Cys-928 each coordinate Zn(2+). The interval 924–931 (WCYPCDSY) is ubiquitin binding.

The protein belongs to the histone deacetylase family. HD type 2 subfamily. It depends on Zn(2+) as a cofactor.

The protein resides in the nucleus. It catalyses the reaction N(6)-acetyl-L-lysyl-[histone] + H2O = L-lysyl-[histone] + acetate. Probable histone deacetylase. Histone deacetylases are responsible for the deacetylation of lysine residues on the N-terminal part of the core histones (H2A, H2B, H3 and H4). Histone deacetylation gives a tag for epigenetic repression and plays an important role in transcriptional regulation, cell cycle progression and developmental events. Histone deacetylases act via the formation of large multiprotein complexes. This Caenorhabditis elegans protein is Histone deacetylase 6 (hda-6).